We begin with the raw amino-acid sequence, 248 residues long: Type II restriction enzyme XhoI (248 aa).

It belongs to the XhoI type II restriction endonuclease family.

The enzyme catalyses Endonucleolytic cleavage of DNA to give specific double-stranded fragments with terminal 5'-phosphates.. Functionally, a P subtype restriction enzyme that recognizes the double-stranded sequence 5'-CTCGAG-3' and cleaves after C-1. The sequence is that of Type II restriction enzyme XhoI from Xanthomonas vasicola.